The chain runs to 73 residues: Cell division protein ZapB (73 aa).

Residues 3 to 67 adopt a coiled-coil conformation; the sequence is LELLSKLETK…WNDKVTGLVG (65 aa).

This sequence belongs to the ZapB family. As to quaternary structure, homodimer. The ends of the coiled-coil dimer bind to each other, forming polymers. Interacts with FtsZ.

It is found in the cytoplasm. Its function is as follows. Non-essential, abundant cell division factor that is required for proper Z-ring formation. It is recruited early to the divisome by direct interaction with FtsZ, stimulating Z-ring assembly and thereby promoting cell division earlier in the cell cycle. Its recruitment to the Z-ring requires functional FtsA or ZipA. The polypeptide is Cell division protein ZapB (Shewanella sp. (strain ANA-3)).